A 428-amino-acid polypeptide reads, in one-letter code: Forkhead box protein B2 (428 aa).

A DNA-binding region (fork-head) is located at residues 12–103 (QKPPYSYISL…GDMFENGSFL (92 aa)). Disordered stretches follow at residues 118-217 (HLHS…MQEA) and 408-428 (PTAAGRADSKGSSLHSVLVHS). Over residues 136-163 (LHPHHPHHAHHHHHHHHHAAHHHHHHHP) the composition is skewed to basic residues. Pro residues-rich tracts occupy residues 164-174 (PQPPPPPPPHM) and 183-192 (APAPQPPHLP). The segment covering 193-217 (SQPAQQPQPQSQPPQTSHPGKMQEA) has biased composition (low complexity).

It is found in the nucleus. Functionally, transcription factor. This chain is Forkhead box protein B2 (Foxb2), found in Mus musculus (Mouse).